Reading from the N-terminus, the 392-residue chain is Heavy metal-associated isoprenylated plant protein 6 (392 aa).

A compositionally biased stretch (basic and acidic residues) spans 1 to 19 (MGEKKEETATKPQGEKKPT). Residues 1 to 22 (MGEKKEETATKPQGEKKPTDGG) are disordered. Residues 23–86 (ITTVVMKLDM…KVADKIKRPV (64 aa)) enclose the HMA 1 domain. 2 residues coordinate Cd(2+): cysteine 34 and cysteine 37. A disordered region spans residues 89-157 (VSTVAPPKKE…PPPPKESTVV (69 aa)). The span at 106–145 (AEKKPSPAAEEKPAEKKPAAVEKPGEKKEEKKKEEGEKKA) shows a compositional bias: basic and acidic residues. An HMA 2 domain is found at 153-216 (ESTVVLKTKL…YLNEKLKRTV (64 aa)). Residues cysteine 164 and cysteine 167 each coordinate Cd(2+). A compositionally biased stretch (basic and acidic residues) spans 258 to 270 (KKVDGGGEKKKEV). Disordered regions lie at residues 258–285 (KKVD…GGDG) and 350–392 (GQGY…CSVM). Residues 272–285 (VGGGGGGGGGGGDG) are compositionally biased toward gly residues. The residue at position 389 (cysteine 389) is a Cysteine methyl ester. A lipid anchor (S-farnesyl cysteine) is attached at cysteine 389. Residues 390-392 (SVM) constitute a propeptide, removed in mature form.

This sequence belongs to the HIPP family. In terms of tissue distribution, expressed in petioles, hypocotyls, peduncles, vascular bundles and root meristems.

The protein resides in the cell membrane. Functionally, heavy-metal-binding protein. Involved in the maintenance of heavy metal homeostasis and/or in detoxification. This is Heavy metal-associated isoprenylated plant protein 6 from Arabidopsis thaliana (Mouse-ear cress).